A 498-amino-acid chain; its full sequence is L-amino acid oxidase (498 aa).

A signal peptide spans 1-11; the sequence is SLLFLAAVGSC. Cysteines 21 and 184 form a disulfide. FAD is bound by residues 54-55, 74-75, 74-78, Arg-82, and 98-101; these read MS, EA, EASER, and GPMR. Residue Arg-101 coordinates substrate. Residue Asn-183 is glycosylated (N-linked (GlcNAc...) asparagine). His-234 lines the substrate pocket. Val-272 contributes to the FAD binding site. Cys-342 and Cys-423 are joined by a disulfide. Tyr-383 is a binding site for substrate. FAD-binding positions include Glu-468, 475-480, and 476-480; these read GWIDST and WIDST. 475–476 provides a ligand contact to substrate; sequence GW.

The protein belongs to the flavin monoamine oxidase family. FIG1 subfamily. Homodimer; non-covalently linked. Requires FAD as cofactor. N-glycosylated. Contains 18.73% carbohydrates. As to expression, expressed by the venom gland.

The protein resides in the secreted. The enzyme catalyses an L-alpha-amino acid + O2 + H2O = a 2-oxocarboxylate + H2O2 + NH4(+). It carries out the reaction L-leucine + O2 + H2O = 4-methyl-2-oxopentanoate + H2O2 + NH4(+). With respect to regulation, strongly inhibited by glutathione, and moderately inhibited by PMSF, acetate iodine and glutamic acid. Is also inhibited by Zn(2+) ions, but not by Ca(2+), Mg(2+) and Mn(2+). In terms of biological role, catalyzes an oxidative deamination of predominantly hydrophobic and aromatic L-amino acids, thus producing hydrogen peroxide that may contribute to the diverse toxic effects of this enzyme. This enzyme shows activity on L-Leu. This enzyme inhibits platelet aggregation in human platelet rich plasma induced by ADP (IC(50)=3.2 mg/mL), and shows antibacterial activities on both Gram-positive and Gram-negative bacteria (P.aeruginosa, V.cholerae, S.aureus, E.faecalis and E.coli). These two effects are due to hydrogen peroxide, since they are inhibited by catalase. It also induces edema in mouse paw pads but does not show hemolytic activity. This protein may also have activities in hemorrhage, and apoptosis. In Bothrops pictus (Desert lancehead), this protein is L-amino acid oxidase.